The primary structure comprises 450 residues: tRNA-2-methylthio-N(6)-dimethylallyladenosine synthase (450 aa).

Positions 14–132 constitute an MTTase N-terminal domain; sequence GEFFIETWGC…FPNYLNEVKK (119 aa). [4Fe-4S] cluster is bound by residues C23, C59, C93, C169, C173, and C176. The region spanning 155-385 is the Radical SAM core domain; the sequence is RKNSMKAFVT…VEVVNEISAK (231 aa). One can recognise a TRAM domain in the interval 388–450; it reads KAYEGKIEEV…NSFSLTGEEI (63 aa).

It belongs to the methylthiotransferase family. MiaB subfamily. Monomer. [4Fe-4S] cluster serves as cofactor.

Its subcellular location is the cytoplasm. The catalysed reaction is N(6)-dimethylallyladenosine(37) in tRNA + (sulfur carrier)-SH + AH2 + 2 S-adenosyl-L-methionine = 2-methylsulfanyl-N(6)-dimethylallyladenosine(37) in tRNA + (sulfur carrier)-H + 5'-deoxyadenosine + L-methionine + A + S-adenosyl-L-homocysteine + 2 H(+). In terms of biological role, catalyzes the methylthiolation of N6-(dimethylallyl)adenosine (i(6)A), leading to the formation of 2-methylthio-N6-(dimethylallyl)adenosine (ms(2)i(6)A) at position 37 in tRNAs that read codons beginning with uridine. In Clostridium botulinum (strain Langeland / NCTC 10281 / Type F), this protein is tRNA-2-methylthio-N(6)-dimethylallyladenosine synthase.